The chain runs to 336 residues: Holliday junction branch migration complex subunit RuvB (336 aa).

Residues 1–11 (MDDDKLLSGDK) show a composition bias toward basic and acidic residues. Positions 1–21 (MDDDKLLSGDKADDEEASLEK) are disordered. The segment at 1 to 184 (MDDDKLLSGD…FGIVEHMAYY (184 aa)) is large ATPase domain (RuvB-L). Residues L23, R24, G65, K68, T69, T70, 131–133 (EDF), R174, Y184, and R221 contribute to the ATP site. T69 provides a ligand contact to Mg(2+). A small ATPAse domain (RuvB-S) region spans residues 185 to 255 (EVADLEDIVK…IVARSLTYLR (71 aa)). Residues 258–336 (DAGLDETDNK…HLGFPYPENK (79 aa)) are head domain (RuvB-H). DNA contacts are provided by R313 and R318.

Belongs to the RuvB family. In terms of assembly, homohexamer. Forms an RuvA(8)-RuvB(12)-Holliday junction (HJ) complex. HJ DNA is sandwiched between 2 RuvA tetramers; dsDNA enters through RuvA and exits via RuvB. An RuvB hexamer assembles on each DNA strand where it exits the tetramer. Each RuvB hexamer is contacted by two RuvA subunits (via domain III) on 2 adjacent RuvB subunits; this complex drives branch migration. In the full resolvosome a probable DNA-RuvA(4)-RuvB(12)-RuvC(2) complex forms which resolves the HJ.

Its subcellular location is the cytoplasm. It catalyses the reaction ATP + H2O = ADP + phosphate + H(+). Its function is as follows. The RuvA-RuvB-RuvC complex processes Holliday junction (HJ) DNA during genetic recombination and DNA repair, while the RuvA-RuvB complex plays an important role in the rescue of blocked DNA replication forks via replication fork reversal (RFR). RuvA specifically binds to HJ cruciform DNA, conferring on it an open structure. The RuvB hexamer acts as an ATP-dependent pump, pulling dsDNA into and through the RuvAB complex. RuvB forms 2 homohexamers on either side of HJ DNA bound by 1 or 2 RuvA tetramers; 4 subunits per hexamer contact DNA at a time. Coordinated motions by a converter formed by DNA-disengaged RuvB subunits stimulates ATP hydrolysis and nucleotide exchange. Immobilization of the converter enables RuvB to convert the ATP-contained energy into a lever motion, pulling 2 nucleotides of DNA out of the RuvA tetramer per ATP hydrolyzed, thus driving DNA branch migration. The RuvB motors rotate together with the DNA substrate, which together with the progressing nucleotide cycle form the mechanistic basis for DNA recombination by continuous HJ branch migration. Branch migration allows RuvC to scan DNA until it finds its consensus sequence, where it cleaves and resolves cruciform DNA. This is Holliday junction branch migration complex subunit RuvB from Lactiplantibacillus plantarum (strain ATCC BAA-793 / NCIMB 8826 / WCFS1) (Lactobacillus plantarum).